The primary structure comprises 90 residues: Small ribosomal subunit protein bS16 (90 aa).

Belongs to the bacterial ribosomal protein bS16 family.

The chain is Small ribosomal subunit protein bS16 from Bacillus licheniformis (strain ATCC 14580 / DSM 13 / JCM 2505 / CCUG 7422 / NBRC 12200 / NCIMB 9375 / NCTC 10341 / NRRL NRS-1264 / Gibson 46).